We begin with the raw amino-acid sequence, 325 residues long: MSETTSWQPSASVANLLKRASIVAAVRRFFTDRGVLEVETPAMSQATVTDVFLYPFQTRFVGPGAADGMTLYLMTSPEYHMKRLLAAGSGPIFQLCRSFRNEESGRHHNPEFTMLEWYRPHYDMYRLMNEVDDLLQQVLDCESAEMLSYQQAFLRHLEIDPLSVDKAQLREAAEKLGLGDIACREDDRDSLVQMLFTFGVEPNIGRDKPAFVYHFPATQASLAEISSEDHRVAERFEVYFKGIELANGFRELTDADEQRQRFEQDNRKRAARGLSQQPIDENLLAALKNGLPECSGVALGVDRLIMLALKAEKLSDVIAFSVERA.

76–78 (SPE) provides a ligand contact to substrate. Residues 100-102 (RNE) and Asn109 each bind ATP. Residue Tyr118 participates in substrate binding. Residue 244-245 (EL) coordinates ATP. Position 251 (Glu251) interacts with substrate. Gly300 contacts ATP.

Belongs to the class-II aminoacyl-tRNA synthetase family. EpmA subfamily. In terms of assembly, homodimer.

It carries out the reaction D-beta-lysine + L-lysyl-[protein] + ATP = N(6)-((3R)-3,6-diaminohexanoyl)-L-lysyl-[protein] + AMP + diphosphate + H(+). In terms of biological role, with EpmB is involved in the beta-lysylation step of the post-translational modification of translation elongation factor P (EF-P). Catalyzes the ATP-dependent activation of (R)-beta-lysine produced by EpmB, forming a lysyl-adenylate, from which the beta-lysyl moiety is then transferred to the epsilon-amino group of a conserved specific lysine residue in EF-P. This chain is Elongation factor P--(R)-beta-lysine ligase, found in Pectobacterium atrosepticum (strain SCRI 1043 / ATCC BAA-672) (Erwinia carotovora subsp. atroseptica).